A 260-amino-acid chain; its full sequence is UPF0246 protein Bcenmc03_2247 (260 aa).

The protein belongs to the UPF0246 family.

The protein is UPF0246 protein Bcenmc03_2247 of Burkholderia orbicola (strain MC0-3).